The following is a 431-amino-acid chain: Glutamate--tRNA ligase 1 (431 aa).

The 'HIGH' region signature appears at 6-16; sequence PSPTGDMHIGN. Residues 235–239 carry the 'KMSKS' region motif; sequence KMSKR. Lysine 238 serves as a coordination point for ATP.

This sequence belongs to the class-I aminoacyl-tRNA synthetase family. Glutamate--tRNA ligase type 1 subfamily. In terms of assembly, monomer.

Its subcellular location is the cytoplasm. The enzyme catalyses tRNA(Glu) + L-glutamate + ATP = L-glutamyl-tRNA(Glu) + AMP + diphosphate. Its function is as follows. Catalyzes the attachment of glutamate to tRNA(Glu) in a two-step reaction: glutamate is first activated by ATP to form Glu-AMP and then transferred to the acceptor end of tRNA(Glu). The protein is Glutamate--tRNA ligase 1 of Nitratiruptor sp. (strain SB155-2).